Reading from the N-terminus, the 298-residue chain is Protease HtpX homolog (298 aa).

A run of 2 helical transmembrane segments spans residues valine 14–leucine 34 and tyrosine 39–phenylalanine 59. Histidine 143 contributes to the Zn(2+) binding site. Glutamate 144 is an active-site residue. Position 147 (histidine 147) interacts with Zn(2+). 2 consecutive transmembrane segments (helical) span residues isoleucine 158 to tryptophan 178 and isoleucine 197 to isoleucine 217. Glutamate 226 contacts Zn(2+).

Belongs to the peptidase M48B family. Zn(2+) is required as a cofactor.

It localises to the cell membrane. The protein is Protease HtpX homolog of Streptococcus pyogenes serotype M49 (strain NZ131).